Here is a 4576-residue protein sequence, read N- to C-terminus: Mucin-2 (4576 aa).

Positions 1-20 (MGLPLARLVAACLVLALAKG) are cleaved as a signal peptide. S21 bears the Phosphoserine mark. The VWFD 1 domain occupies 32 to 205 (HVCSTWGDFH…KINKPEVQCE (174 aa)). Disulfide bonds link C34–C166, C56–C204, C64–C163, C216–C253, C223–C248, C235–C273, C255–C261, C263–C289, C293–C327, C306–C319, C310–C349, C329–C343, C351–C373, C368–C385, C371–C380, C389–C526, C411–C561, C433–C441, C572–C617, C586–C612, C599–C637, C619–C625, C627–C652, C659–C696, C672–C686, C676–C716, C698–C710, C718–C740, and C738–C747. D46 serves as a coordination point for Ca(2+). 2 residues coordinate Cu(+): M143 and M151. Cu(2+) is bound at residue E153. N160 is a glycosylation site (N-linked (GlcNAc...) asparagine). Ca(2+) is bound by residues D168, N170, and E177. Residue H275 coordinates Cu(2+). Residues 293–349 (CPNNMVYLESSSPCVDTCSHLEVSSLCEEHYMDGCFCPEGTVYDDITGSGCIPVSQC) enclose the TIL domain. H322 is a Cu(2+) binding site. M324 provides a ligand contact to Cu(+). In terms of domain architecture, VWFD 2 spans 387–562 (ETCALEGGSH…NTWKAQSSCH (176 aa)). D401 contacts Ca(2+). N-linked (GlcNAc...) asparagine glycosylation is present at N421. Positions 528, 530, 532, 535, and 536 each coordinate Ca(2+). N-linked (GlcNAc...) asparagine glycosylation is present at N668. N-linked (GlcNAc...) asparagine glycosylation occurs at N768. Disulfide bonds link C782-C818, C800-C812, C820-C843, C837-C855, C841-C850, C859-C990, C881-C1025, C890-C987, C907-C914, C1035-C1078, C1049-C1073, C1060-C1100, C1080-C1088, C1090-C1115, C1106-C1135, C1119-C1161, C1143-C1185, C1165-C1179, C1187-C1211, C1206-C1236, and C1209-C1219. N838 is a glycosylation site (N-linked (GlcNAc...) asparagine). The VWFD 3 domain maps to 857–1026 (STCSIYGSGH…NSWKEASTCP (170 aa)). D871 is a binding site for Ca(2+). N893 carries N-linked (GlcNAc...) asparagine glycosylation. 4 residues coordinate Ca(2+): N992, D994, N999, and D1000. N-linked (GlcNAc...) asparagine glycosylation is found at N1137 and N1152. Residues N1213, N1228, and N1244 are each glycosylated (N-linked (GlcNAc...) asparagine). O-linked (GalNAc) threonine glycosylation is found at T1265, T1268, T1269, T1281, and T1292. 5 residues coordinate Ca(2+): N1305, H1308, G1315, D1316, and E1318. Residue N1352 is glycosylated (N-linked (GlcNAc...) asparagine). Positions 1375 and 1376 each coordinate Ca(2+). 5 tandem repeats follow at residues 1395-1415 (SPTT…PTTL), 1416-1427 (PTSSPVTSSATL), 1428-1437 (PTTSSITSTI), 1438-1453 (SPTT…SPTT), and 1454-1460 (SPTTSPT). A disordered region spans residues 1395–2866 (SPTTSTTTLS…PTTSSTFTTP (1472 aa)). The stretch at 1478–1497 (PSTTSPTTPSTTPSTTSPTT) is one 7B repeat. The stretch at 1498–1510 (PSTTSPTTPTSTS) is one 8A repeat. The stretch at 1530 to 1556 (SPTTSPTTPSTTSPTISTTTSTISPTT) is one 9B repeat. One copy of the 10A repeat lies at 1557-1572 (PSTTSPNTPSTTSSTI). Residues 1573 to 1588 (PSTTSPTTPSTTSPTI) form a 10B repeat. The 11A repeat unit spans residues 1589–1607 (STTTSTTSPTTPSTTSPTT). The 11B repeat unit spans residues 1608 to 1634 (PSTTSPTTPSTTSPTISTTTLTTSPTT). 2 consecutive repeat copies span residues 1635–1642 (PSTTSPTT) and 1665–1681 (ISPT…LSTT). N-linked (GlcNAc...) asparagine glycosylation is found at N2529 and N2910. Low complexity-rich tracts occupy residues 2975-3623 (PSST…GSTP) and 3631-3706 (PGPT…TSPS). A disordered region spans residues 2975-3706 (PSSTTTETPT…SSTSPITSPS (732 aa)). Residues N3734, N3745, and N3756 are each glycosylated (N-linked (GlcNAc...) asparagine). The segment covering 3764-3774 (STPTPSTPTPT) has biased composition (pro residues). Positions 3764–3806 (STPTPSTPTPTPSQTTTPSTTSSKSTPSTPQSTSPKSTLSTPT) are disordered. Low complexity predominate over residues 3775–3806 (PSQTTTPSTTSSKSTPSTPQSTSPKSTLSTPT). N3823, N3830, and N3903 each carry an N-linked (GlcNAc...) asparagine glycan. Residues 3880 to 4063 (CYCTGWGDPH…VNDPSKPHCP (184 aa)) enclose the VWFD 4 domain. Cystine bridges form between C3882–C4023, C3904–C4062, and C3928–C3936. N3991, N4017, N4028, N4083, N4149, N4183, N4254, N4277, N4351, N4366, N4434, N4465, and N4488 each carry an N-linked (GlcNAc...) asparagine glycan. VWFC domains are found at residues 4213 to 4282 (CVGP…TSCK) and 4320 to 4387 (GVCV…KKCQ). Disulfide bonds link C4471–C4518, C4485–C4532, C4494–C4548, and C4498–C4550. The CTCK domain occupies 4471-4556 (CSAVSVMKEI…SCLCQDTVCG (86 aa)).

In terms of assembly, homomultimer; disulfide-linked. The N- and C-terminus mediate their assembly into higher order structures to form filaments. The CTCK domains of two polypeptides associate in the endoplasmic reticulum to generate intermolecularly disulfide-bonded dimers. These dimers progress to the Golgi apparatus, which is a more acidic environment than the endoplasmic reticulum. Under acidic conditions, the N-termini form non-covalent intermolecular interactions that juxtapose assemblies of the third VWD domain (VWD3) from different CTCK-linked dimers. The VWD3 assemblies then become disulfide bonded to one another to produce long, disulfide-linked polymers that remain highly compact until secretion. Interacts with FCGBP. Interacts with AGR2; disulfide-linked. O-glycosylated. O-glycosylation is required for mucin assembly. Goblet cells synthesize two forms of mucin that differ in branched chain O-glycosylation and the site of production in the colon. In terms of processing, may undergo proteolytic cleavage in the outer mucus layer of the colon, contributing to the expanded volume and loose nature of this layer which allows for bacterial colonization in contrast to the inner mucus layer which is dense and devoid of bacteria. Post-translationally, at low pH of 6 and under, undergoes autocatalytic cleavage in vitro in the N-terminal region of the fourth VWD domain. It is likely that this also occurs in vivo and is triggered by the low pH of the late secretory pathway. In terms of tissue distribution, highly expressed in goblet cells of the colon with lower levels in the small intestine and no expression in the stomach (at protein level).

The protein resides in the secreted. Functionally, coats the epithelia of the intestines and other mucus membrane-containing organs to provide a protective, lubricating barrier against particles and infectious agents at mucosal surfaces. Major constituent of the colon mucus, which is mainly formed by large polymeric networks of MUC2 secreted by goblet cells that cover the exposed surfaces of intestine. MUC2 networks form hydrogels that guard the underlying epithelium from pathogens and other hazardous matter entering from the outside world, while permitting nutrient absorption and gas exchange. Acts as a divalent copper chaperone that protects intestinal cells from copper toxicity and facilitates nutritional copper unptake into cells. Binds both Cu(2+) and its reduced form, Cu(1+), at two juxtaposed binding sites: Cu(2+), once reduced to Cu(1+) by vitamin C (ascorbate) or other dietary antioxidants, transits to the other binding site. MUC2-bound Cu(1+) is protected from oxidation in aerobic environments, and can be released for nutritional delivery to cells. Mucin gels store antimicrobial molecules that participate in innate immunity. Mucin glycoproteins also house and feed the microbiome, lubricate tissue surfaces, and may facilitate the removal of contaminants and waste products from the body. Goblet cells synthesize two forms of MUC2 mucin that differ in branched chain O-glycosylation and the site of production in the colon: a (1) 'thick' mucus that wraps the microbiota to form fecal pellets is produced in the proximal, ascending colon. 'Thick' mucus transits along the descending colon and is lubricated by a (2) 'thin' MUC2 mucus produced in the distal colon which adheres to the 'thick' mucus. This is Mucin-2 from Mus musculus (Mouse).